We begin with the raw amino-acid sequence, 128 residues long: Early E3 14.5 kDa protein (128 aa).

The protein belongs to the adenoviridae E3_15 family.

In terms of biological role, protects virus-infected cells from TNF-induced cytolysis. The sequence is that of Early E3 14.5 kDa protein from Human adenovirus C serotype 5 (HAdV-5).